The primary structure comprises 313 residues: 1-phosphofructokinase (313 aa).

Residues 222–227 and 254–255 each bind ATP; these read SMGAKG and GD. The Proton acceptor role is filled by Asp255.

The protein belongs to the carbohydrate kinase PfkB family.

It carries out the reaction beta-D-fructose 1-phosphate + ATP = beta-D-fructose 1,6-bisphosphate + ADP + H(+). Catalyzes the ATP-dependent phosphorylation of fructose-l-phosphate to fructose-l,6-bisphosphate. This is 1-phosphofructokinase (fruK) from Haemophilus influenzae (strain ATCC 51907 / DSM 11121 / KW20 / Rd).